The following is a 1320-amino-acid chain: Inner centromere protein A (1320 aa).

5 disordered regions span residues 53–75 (KNSN…NNIS), 426–447 (QEKQ…QPVV), 611–679 (NEPI…VVPP), 701–877 (EEEE…NTAS), and 896–1215 (TKSP…DGDE). Composition is skewed to low complexity over residues 54–75 (NSNY…NNIS), 429–447 (QQQQ…QPVV), and 615–640 (QQPS…SSSS). A coiled-coil region spans residues 221–444 (QQNQFQEQHK…KQQEKQQQQQ (224 aa)). Residues 653–668 (TIVTSKPTNKVQPQSL) show a composition bias toward polar residues. Over residues 669–679 (NSNINNNVVPP) the composition is skewed to low complexity. Residues 683 to 855 (AAIANKLKKQ…QKKKTVQTIL (173 aa)) adopt a coiled-coil conformation. The span at 701 to 835 (EEEERLRKKQ…QEKEKQEKQK (135 aa)) shows a compositional bias: basic and acidic residues. Residues 851 to 863 (VQTILPTPQTPSR) are compositionally biased toward polar residues. Positions 864 to 877 (SANNNYDDAANTAS) are enriched in low complexity. Composition is skewed to acidic residues over residues 908–926 (DDQD…ENSE) and 934–951 (QDDS…DSDE). Positions 965–977 (NKNKNSNNSNNNN) are enriched in low complexity. Over residues 981–1000 (QSRKDKSIVFDSDSLNRNHN) the composition is skewed to basic and acidic residues. Low complexity-rich tracts occupy residues 1026–1040 (SNMK…YSNS) and 1047–1061 (SPPS…SSES). Residues 1062 to 1071 (NDCFSPLTPT) are compositionally biased toward polar residues. Residues 1072–1096 (NNNKINNNKINNNNSNNNSFNNSNS) are compositionally biased toward low complexity. Polar residues predominate over residues 1120–1136 (SKTSPFLTIRNTPSPLK). Residues 1143–1154 (NMSSASSLSSFD) are compositionally biased toward low complexity. A compositionally biased stretch (acidic residues) spans 1155-1170 (SDNDSDYNDNDIDDGE). The span at 1175 to 1187 (PNENFTTPLKNQE) shows a compositional bias: polar residues. Low complexity predominate over residues 1188-1198 (NNNNNNSNNSN). The span at 1199 to 1209 (TQYPIITSPPS) shows a compositional bias: polar residues.

The protein belongs to the INCENP family. In terms of assembly, interacts with aurK.

The protein resides in the chromosome. Its subcellular location is the centromere. The protein localises to the cytoplasm. It is found in the cytoskeleton. It localises to the spindle. The protein resides in the nucleus. Its subcellular location is the cleavage furrow. Chromosomal passenger protein that seems to be required for chromosome segregation and the onset of cytokinesis during mitosis. Plays a key role in the abscission of daughter cells at the end of cytokinesis and in the establishment or maintenance of a bipolar spindle. This Dictyostelium discoideum (Social amoeba) protein is Inner centromere protein A (icpA).